The following is a 155-amino-acid chain: UPF0178 protein TDE_2151 (155 aa).

Belongs to the UPF0178 family.

In Treponema denticola (strain ATCC 35405 / DSM 14222 / CIP 103919 / JCM 8153 / KCTC 15104), this protein is UPF0178 protein TDE_2151.